The chain runs to 543 residues: MFSLQELCRKNIYILPYPLGEHVLQQLGLYWKGYGSLQRIGDDHVLLQQDLIFSINEALRMAGEEGNNEVVKLLLLWEGNLHYAIIGALEGDRYDLIHKYYGQIGDCHKILPLIQDPQIFEKCHELSTSCNIRCLLEHAVKHNMLSILQKHKDQIRFHLALTQILFELACHERKNDIIRWIGYSLHIYQLETIFDVAFAHKNLSLYVLGYELLMHKVNTEAANIDLPNLLSYHLRTAAAGGLLHFMFETLKHGGYVDKAVLSAAISYKHRKVVAHFIHQVPRKTVEKLLLHAVQTRAPKKTLNLLLSSLNYSVHPITKQLVRNVVDYRSTLIVKLLLMRRKRKLNLVDAVLARLVRYSTYTDTVKFMGEFSVSPEKVIKMAARESRTFMIEMISKAVWKNHPQTMIHHLKQLADTMKPQSGKDLIIYTIHYIYQSSNLLVAEEEKNIFKLAKFYANHNSVNRFKQICEDYYTLDVDTRFKTLILECFEIAVQKNYPRIATIVDDFIRFLFYKGDITEEEISEAYSLKNAELYVDLKWLQQEEN.

Belongs to the asfivirus MGF 505 family.

Functionally, plays a role in virus cell tropism, and may be required for efficient virus replication in macrophages. The protein is Protein MGF 505-10R of Ornithodoros (relapsing fever ticks).